Reading from the N-terminus, the 316-residue chain is tRNA-cytidine(32) 2-sulfurtransferase (316 aa).

Positions 52 to 57 match the PP-loop motif motif; that stretch reads SGGKDS. [4Fe-4S] cluster contacts are provided by C127, C130, and C218.

Belongs to the TtcA family. Homodimer. The cofactor is Mg(2+). Requires [4Fe-4S] cluster as cofactor.

It localises to the cytoplasm. The enzyme catalyses cytidine(32) in tRNA + S-sulfanyl-L-cysteinyl-[cysteine desulfurase] + AH2 + ATP = 2-thiocytidine(32) in tRNA + L-cysteinyl-[cysteine desulfurase] + A + AMP + diphosphate + H(+). The protein operates within tRNA modification. Functionally, catalyzes the ATP-dependent 2-thiolation of cytidine in position 32 of tRNA, to form 2-thiocytidine (s(2)C32). The sulfur atoms are provided by the cysteine/cysteine desulfurase (IscS) system. The polypeptide is tRNA-cytidine(32) 2-sulfurtransferase (Haemophilus ducreyi (strain 35000HP / ATCC 700724)).